We begin with the raw amino-acid sequence, 268 residues long: L-cystine-binding protein TcyA (268 aa).

An N-terminal signal peptide occupies residues 1–19 (MKKALLALFMVVSIAALAA). A lipid anchor (N-palmitoyl cysteine) is attached at cysteine 20. Cysteine 20 carries the S-diacylglycerol cysteine lipid modification.

This sequence belongs to the bacterial solute-binding protein 3 family. In terms of assembly, the complex is composed of two ATP-binding proteins (TcyC), two transmembrane proteins (TcyB) and a solute-binding protein (TcyA).

Its subcellular location is the cell membrane. Its function is as follows. Part of the ABC transporter complex TcyABC involved in L-cystine import. This Bacillus subtilis (strain 168) protein is L-cystine-binding protein TcyA (tcyA).